The sequence spans 139 residues: Large ribosomal subunit protein bL17 (139 aa).

Belongs to the bacterial ribosomal protein bL17 family. As to quaternary structure, part of the 50S ribosomal subunit. Contacts protein L32.

The chain is Large ribosomal subunit protein bL17 from Cereibacter sphaeroides (strain ATCC 17029 / ATH 2.4.9) (Rhodobacter sphaeroides).